The chain runs to 77 residues: NAD(P)H-quinone oxidoreductase subunit L (77 aa).

Transmembrane regions (helical) follow at residues 12–32 (FVAYVGIISIYLFVIPLILFY) and 47–67 (LGVYGLVFLFFPGLILFSPFL).

This sequence belongs to the complex I NdhL subunit family. In terms of assembly, NDH-1 can be composed of about 15 different subunits; different subcomplexes with different compositions have been identified which probably have different functions.

Its subcellular location is the cellular thylakoid membrane. The catalysed reaction is a plastoquinone + NADH + (n+1) H(+)(in) = a plastoquinol + NAD(+) + n H(+)(out). The enzyme catalyses a plastoquinone + NADPH + (n+1) H(+)(in) = a plastoquinol + NADP(+) + n H(+)(out). Functionally, NDH-1 shuttles electrons from an unknown electron donor, via FMN and iron-sulfur (Fe-S) centers, to quinones in the respiratory and/or the photosynthetic chain. The immediate electron acceptor for the enzyme in this species is believed to be plastoquinone. Couples the redox reaction to proton translocation, and thus conserves the redox energy in a proton gradient. Cyanobacterial NDH-1 also plays a role in inorganic carbon-concentration. The chain is NAD(P)H-quinone oxidoreductase subunit L from Prochlorococcus marinus (strain MIT 9515).